A 305-amino-acid chain; its full sequence is Popeye domain-containing protein 3 (305 aa).

Asn-4 is a glycosylation site (N-linked (GlcNAc...) asparagine). The next 3 helical transmembrane spans lie at 34–54, 55–75, and 77–99; these read SILFVVGFMGGSGFSGLLYVF, SLLGLGFLCSSVWAWLDVCAA, and IFSWNFILFAICFVQFIYVTYQV. Positions 273 to 305 are disordered; that stretch reads PETPPVPPPRRLQRRSSGRPRPGVPNCSSPRKQ. N-linked (GlcNAc...) asparagine glycosylation occurs at Asn-298.

Belongs to the popeye family. As to expression, expressed first preferentially in atrium and later also in the subepicardial compact layer of the ventricles.

The protein resides in the membrane. May play a role in the maintenance of heart function mediated, at least in part, through cAMP-binding. May play a role in the regulation of KCNK2-mediated current amplitude. The chain is Popeye domain-containing protein 3 (POPDC3) from Gallus gallus (Chicken).